Reading from the N-terminus, the 734-residue chain is MLQYCLLRRYRFLLRQHAQVIKRCYSGDIRNIGILAHIDAGKTTTTERMLFYAGKTRSLGEVHRGNTVTDYLAQERERGITICSSAVTFNWNGKRINLLDTPGHIDFTMEVEQSLYAVDGVIVVLDGTAGVEAQTVTVWTQADKHKLPRLVFVNKMDRPDANFEKCIVDLTEKLDAKPICTQYPTKSADGQLGIFDVITMEQMTWQQNDLGRNYSKVKLESSTELQEKRNELIDQLSGLDDELADVVISTESFDKVSNELIGQALRRATCQQKVVPVLLGSAYKNIGIQPLMDAVNAYLPMPEERNQMYDCFGNDFAGKVFKIVHDKQRGPLTLVRLLRGELKRGMRLLCSARGQAEVVSKIYEPLADEYREVGSMQAGDVAICAGLKSTVTGDLLTSSHTSLKNAQKRLLQSRGAAMPQDEDEVLDDASHELFSIEPKIPDAVYFCSIEPPSISSQTAMEQALKQLQREDPSLRVSYDSVTGQTVLGGMGELHMDIIKSRMLSEYKIDVDLGPLQIAYKETLGSSAITTLSVDKDIAGSKQSVSITLQLVSDQRELFSLDKSPENVQHLNALRPRILGVLRKGAVSALERGPRVGGQVVDTQIRLHNVTVGRGTADSFVMAAAAQCVQKLLITSGTRLLEPIMAIQIVAPNERISGIMADLSRRRALIRDVTSKGDRNKIILVNAPLAELSGYSSALRTISSGTASMTMQPCGFSEMNTADESLAVRRAQGLD.

The N-terminal 25 residues, 1 to 25 (MLQYCLLRRYRFLLRQHAQVIKRCY), are a transit peptide targeting the mitochondrion. A tr-type G domain is found at 27-303 (GDIRNIGILA…AVNAYLPMPE (277 aa)). GTP contacts are provided by residues 36–43 (AHIDAGKT), 100–104 (DTPGH), and 154–157 (NKMD).

This sequence belongs to the TRAFAC class translation factor GTPase superfamily. Classic translation factor GTPase family. EF-G/EF-2 subfamily.

It localises to the mitochondrion. Functionally, mitochondrial GTPase that mediates the disassembly of ribosomes from messenger RNA at the termination of mitochondrial protein biosynthesis. Not involved in the GTP-dependent ribosomal translocation step during translation elongation. This chain is Ribosome-releasing factor 2, mitochondrial, found in Drosophila grimshawi (Hawaiian fruit fly).